The chain runs to 198 residues: MRTDSGVWLTVVAHMIVGVDEAGRGPLAGPVVAAAVLLCEGGIAGLDDSKKLSARRRGALESAIRAQCRWGIGEASVEEIDRINILQATFLAMTRAVEALGFEPAEVLVDGNRLPRWRYQARAIVGGDALHPCISAASILAKQHRDRLMIAAAQDYPAFGWESNMGYGTAQHLAALRRHGPTPHHRTSFAPVAQLQLV.

Residues 14-198 (HMIVGVDEAG…FAPVAQLQLV (185 aa)) enclose the RNase H type-2 domain. Aspartate 20, glutamate 21, and aspartate 110 together coordinate a divalent metal cation.

It belongs to the RNase HII family. Mn(2+) serves as cofactor. Mg(2+) is required as a cofactor.

It localises to the cytoplasm. The enzyme catalyses Endonucleolytic cleavage to 5'-phosphomonoester.. Endonuclease that specifically degrades the RNA of RNA-DNA hybrids. This chain is Ribonuclease HII, found in Sphingopyxis alaskensis (strain DSM 13593 / LMG 18877 / RB2256) (Sphingomonas alaskensis).